The following is a 166-amino-acid chain: Phosphopantetheine adenylyltransferase (166 aa).

Residue Ser-9 coordinates substrate. Residues 9–10 and His-17 each bind ATP; that span reads SF. Residues Lys-41, Thr-74, and Arg-88 each coordinate substrate. Residues 89 to 91, Glu-99, and 124 to 130 contribute to the ATP site; these read GLR and DSFISSS.

The protein belongs to the bacterial CoaD family. Homohexamer. The cofactor is Mg(2+).

The protein localises to the cytoplasm. The catalysed reaction is (R)-4'-phosphopantetheine + ATP + H(+) = 3'-dephospho-CoA + diphosphate. The protein operates within cofactor biosynthesis; coenzyme A biosynthesis; CoA from (R)-pantothenate: step 4/5. Its function is as follows. Reversibly transfers an adenylyl group from ATP to 4'-phosphopantetheine, yielding dephospho-CoA (dPCoA) and pyrophosphate. This is Phosphopantetheine adenylyltransferase from Lactobacillus johnsonii (strain CNCM I-12250 / La1 / NCC 533).